Reading from the N-terminus, the 322-residue chain is Breast cancer metastasis-suppressor 1-like protein (322 aa).

Residues 1 to 16 show a composition bias toward basic and acidic residues; sequence MPVHSREKKESNHNDM. The segment at 1 to 56 is disordered; the sequence is MPVHSREKKESNHNDMEVDYPENEGTSSEEDDSDSSSGSEEGDSSEMDDEDCERRR. Residues 17-51 show a composition bias toward acidic residues; the sequence is EVDYPENEGTSSEEDDSDSSSGSEEGDSSEMDDED. Coiled coils occupy residues 50–82 and 147–178; these read EDCE…KERL and EKLL…ITSE.

The protein belongs to the BRMS1 family.

It is found in the nucleus. Involved in the histone deacetylase (HDAC1)-dependent transcriptional repression activity. This Xenopus tropicalis (Western clawed frog) protein is Breast cancer metastasis-suppressor 1-like protein (brms1l).